The primary structure comprises 113 residues: Cytochrome c55X (113 aa).

An N-terminal signal peptide occupies residues 1-26 (MTVARHAVSRLGLALASFLLFPLALA). Positions 45, 48, and 49 each coordinate heme c.

In terms of processing, binds 1 heme c group covalently per subunit.

Its subcellular location is the periplasm. Functionally, monoheme c-type cytochrome. The chain is Cytochrome c55X (nirC) from Stutzerimonas stutzeri (Pseudomonas stutzeri).